A 301-amino-acid polypeptide reads, in one-letter code: Oxygen-dependent coproporphyrinogen-III oxidase (301 aa).

Substrate is bound at residue S94. Positions 98 and 108 each coordinate a divalent metal cation. H108 (proton donor) is an active-site residue. A substrate-binding site is contributed by 110–112 (NVR). The a divalent metal cation site is built by H147 and H177. The tract at residues 242-277 (YVEFNLVYDRGTLFGLQSGGRTESILMSMPPLARWE) is important for dimerization. 260 to 262 (GGR) is a binding site for substrate.

The protein belongs to the aerobic coproporphyrinogen-III oxidase family. In terms of assembly, homodimer. A divalent metal cation is required as a cofactor.

The protein localises to the cytoplasm. The catalysed reaction is coproporphyrinogen III + O2 + 2 H(+) = protoporphyrinogen IX + 2 CO2 + 2 H2O. Its pathway is porphyrin-containing compound metabolism; protoporphyrin-IX biosynthesis; protoporphyrinogen-IX from coproporphyrinogen-III (O2 route): step 1/1. Functionally, involved in the heme biosynthesis. Catalyzes the aerobic oxidative decarboxylation of propionate groups of rings A and B of coproporphyrinogen-III to yield the vinyl groups in protoporphyrinogen-IX. This is Oxygen-dependent coproporphyrinogen-III oxidase from Photobacterium profundum (strain SS9).